The sequence spans 106 residues: UPF0145 protein APJL_0492 (106 aa).

Belongs to the UPF0145 family.

This chain is UPF0145 protein APJL_0492, found in Actinobacillus pleuropneumoniae serotype 3 (strain JL03).